A 354-amino-acid chain; its full sequence is Ferrochelatase (354 aa).

Residues H214 and E295 each coordinate Fe cation.

This sequence belongs to the ferrochelatase family.

It localises to the cytoplasm. The catalysed reaction is heme b + 2 H(+) = protoporphyrin IX + Fe(2+). The protein operates within porphyrin-containing compound metabolism; protoheme biosynthesis; protoheme from protoporphyrin-IX: step 1/1. Its function is as follows. Catalyzes the ferrous insertion into protoporphyrin IX. The chain is Ferrochelatase from Burkholderia cenocepacia (strain HI2424).